The chain runs to 530 residues: Histone-arginine methyltransferase CARMER (530 aa).

An SAM-dependent MTase PRMT-type domain is found at 141-450 (ASQYFQFYGY…QSYDVTIDLH (310 aa)). Residues Gln-154, Arg-163, Gly-187, Glu-209, Glu-238, and Thr-266 each contribute to the S-adenosyl-L-methionine site. Asymmetric dimethylarginine; by autocatalysis is present on Arg-501.

It belongs to the class I-like SAM-binding methyltransferase superfamily. Protein arginine N-methyltransferase family. In terms of assembly, homodimer. The dimethylated protein is the major form.

It localises to the cytoplasm. Its subcellular location is the nucleus. It carries out the reaction L-arginyl-[protein] + 2 S-adenosyl-L-methionine = N(omega),N(omega)-dimethyl-L-arginyl-[protein] + 2 S-adenosyl-L-homocysteine + 2 H(+). Methylates (mono- and asymmetric dimethylation) the guanidino nitrogens of arginyl residues in proteins. May methylate histone H3 at 'Arg-17' and activate transcription via chromatin remodeling. The protein is Histone-arginine methyltransferase CARMER (Art4) of Drosophila simulans (Fruit fly).